The following is a 288-amino-acid chain: Quinate/shikimate dehydrogenase (288 aa).

Lysine 71 and aspartate 107 together coordinate substrate. NAD(+) contacts are provided by residues 132–135 (AGGA), 155–158 (NRRD), lysine 205, 232–235 (CVYN), and glycine 255.

Belongs to the shikimate dehydrogenase family. Homodimer.

It carries out the reaction L-quinate + NAD(+) = 3-dehydroquinate + NADH + H(+). The enzyme catalyses L-quinate + NADP(+) = 3-dehydroquinate + NADPH + H(+). It catalyses the reaction shikimate + NADP(+) = 3-dehydroshikimate + NADPH + H(+). The catalysed reaction is shikimate + NAD(+) = 3-dehydroshikimate + NADH + H(+). The protein operates within metabolic intermediate biosynthesis; chorismate biosynthesis; chorismate from D-erythrose 4-phosphate and phosphoenolpyruvate: step 4/7. Its function is as follows. The actual biological function of YdiB remains unclear, nor is it known whether 3-dehydroshikimate or quinate represents the natural substrate. Catalyzes the reversible NAD-dependent reduction of both 3-dehydroshikimate (DHSA) and 3-dehydroquinate to yield shikimate (SA) and quinate, respectively. It can use both NAD or NADP for catalysis, however it has higher catalytic efficiency with NAD. This chain is Quinate/shikimate dehydrogenase, found in Escherichia coli O17:K52:H18 (strain UMN026 / ExPEC).